A 450-amino-acid chain; its full sequence is Enolase (450 aa).

Position 167 (Gln-167) interacts with (2R)-2-phosphoglycerate. Glu-209 acts as the Proton donor in catalysis. Asp-250, Glu-307, and Asp-334 together coordinate Mg(2+). Residues Lys-359, Arg-388, Ser-389, and Lys-410 each contribute to the (2R)-2-phosphoglycerate site. Lys-359 functions as the Proton acceptor in the catalytic mechanism.

It belongs to the enolase family. Requires Mg(2+) as cofactor.

The protein resides in the cytoplasm. The protein localises to the secreted. It localises to the cell surface. It carries out the reaction (2R)-2-phosphoglycerate = phosphoenolpyruvate + H2O. It participates in carbohydrate degradation; glycolysis; pyruvate from D-glyceraldehyde 3-phosphate: step 4/5. Its function is as follows. Catalyzes the reversible conversion of 2-phosphoglycerate (2-PG) into phosphoenolpyruvate (PEP). It is essential for the degradation of carbohydrates via glycolysis. 'Moonlights' as a plasminogen receptor and plasmin activator. Contributes to host (pig) cell adhesion; anti-enolase antibodies decrease binding to porcine kidney cells about 60%. Binds host plasminogen and fibronectin in vitro; enhances the activity of host tissue-specific plasminogen activator (tPA), and helps plasminogen and tPA degrade articifial host extracellular matrices. The chain is Enolase from Mesomycoplasma hyorhinis (strain HUB-1) (Mycoplasma hyorhinis).